Consider the following 137-residue polypeptide: ATP synthase epsilon chain, chloroplastic (137 aa).

Belongs to the ATPase epsilon chain family. As to quaternary structure, F-type ATPases have 2 components, CF(1) - the catalytic core - and CF(0) - the membrane proton channel. CF(1) has five subunits: alpha(3), beta(3), gamma(1), delta(1), epsilon(1). CF(0) has three main subunits: a, b and c.

The protein localises to the plastid. The protein resides in the chloroplast thylakoid membrane. Its function is as follows. Produces ATP from ADP in the presence of a proton gradient across the membrane. The polypeptide is ATP synthase epsilon chain, chloroplastic (Sorghum bicolor (Sorghum)).